A 144-amino-acid chain; its full sequence is Small ribosomal subunit protein bS16 (144 aa).

A disordered region spans residues 115–144 (NEPVAEAVTPKKKAKKDDAAAESTEAEAAE).

It belongs to the bacterial ribosomal protein bS16 family.

This is Small ribosomal subunit protein bS16 from Nocardia farcinica (strain IFM 10152).